The sequence spans 311 residues: Methionyl-tRNA formyltransferase (311 aa).

109–112 (SKLP) lines the (6S)-5,6,7,8-tetrahydrofolate pocket.

This sequence belongs to the Fmt family.

The catalysed reaction is L-methionyl-tRNA(fMet) + (6R)-10-formyltetrahydrofolate = N-formyl-L-methionyl-tRNA(fMet) + (6S)-5,6,7,8-tetrahydrofolate + H(+). Its function is as follows. Attaches a formyl group to the free amino group of methionyl-tRNA(fMet). The formyl group appears to play a dual role in the initiator identity of N-formylmethionyl-tRNA by promoting its recognition by IF2 and preventing the misappropriation of this tRNA by the elongation apparatus. The sequence is that of Methionyl-tRNA formyltransferase (fmt) from Mycoplasma pneumoniae (strain ATCC 29342 / M129 / Subtype 1) (Mycoplasmoides pneumoniae).